Here is a 400-residue protein sequence, read N- to C-terminus: CinA-like protein (400 aa).

Belongs to the CinA family.

The polypeptide is CinA-like protein (Shigella flexneri).